The sequence spans 541 residues: Protein wntless homolog (541 aa).

At 1-15 (MAGAIIENMSTKKLC) the chain is on the cytoplasmic side. The helical transmembrane segment at 16–36 (IVGGILLVFQIIAFLVGGLIA) threads the bilayer. Topologically, residues 37–232 (PGPTTAVSYM…GIHQNGGFTK (196 aa)) are lumenal. The tract at residues 101-232 (MEMSPWFQFM…GIHQNGGFTK (132 aa)) is interaction with Wnt proteins. A helical transmembrane segment spans residues 233 to 253 (VWFAMKTFLTPSIFIIMVWYW). The Cytoplasmic segment spans residues 254–268 (RRITMMSRPPVLLEK). Residues 269–289 (VIFALGISMTFINIPVEWFSI) traverse the membrane as a helical segment. At 290 to 303 (GFDWTWMLLFGDIR) the chain is on the lumenal side. A helical membrane pass occupies residues 304–324 (QGIFYAMLLSFWIIFCGEHMM). Residues 325-331 (DQHERNH) lie on the Cytoplasmic side of the membrane. The helical transmembrane segment at 332–352 (IAGYWKQVGPIAVGSFCLFIF) threads the bilayer. The Lumenal segment spans residues 353–380 (DMCERGVQLTNPFYSIWTTDIGTELAMA). Residues 381-401 (FIIVAGICLCLYFLFLCFMVF) form a helical membrane-spanning segment. Over 402 to 431 (QVFRNISGKQSSLPAMSKVRRLHYEGLIFR) the chain is Cytoplasmic. A helical transmembrane segment spans residues 432 to 452 (FKFLMLITLACAAMTVIFFIV). Topologically, residues 453–471 (SQVTEGHWKWGGVTVQVNS) are lumenal. A helical membrane pass occupies residues 472–492 (AFFTGIYGMWNLYVFALMFLY). The Cytoplasmic segment spans residues 493 to 541 (APSHKNYGEDQSNGDLGVHSGEELQLTTTITHVDGPTEIYKLTRKEAQE).

It belongs to the wntless family. As to quaternary structure, interacts with WNT3A. Interacts with WNT1, WNT3 and WNT5A. Post-translationally, N-glycosylated.

The protein resides in the golgi apparatus membrane. Its subcellular location is the cytoplasmic vesicle membrane. It localises to the cell membrane. The protein localises to the endoplasmic reticulum membrane. It is found in the early endosome membrane. Its function is as follows. Regulates Wnt proteins sorting and secretion in a feedback regulatory mechanism. This reciprocal interaction plays a key role in the regulation of expression, subcellular location, binding and organelle-specific association of Wnt proteins. Plays also an important role in establishment of the anterior-posterior body axis formation during development. This Homo sapiens (Human) protein is Protein wntless homolog (WLS).